Here is a 254-residue protein sequence, read N- to C-terminus: MTKLEVCCYSVDCAQIAEKAGADRVELCCGQSEGGLTPSVGALIQARETVTIPVHPIVRPRGGDFCYSSNDFTIMKNDIARIRDLGFAGVVVGVLDTDGHIDMPRMREIMSVSGSLAVTFHRAFDMCQNPMIALKQLAELNVARILTSGQQQNAELGLALLKDLVAATKDQGPIIMAGAGVRLTNMQKFIDAGIRELHSSAGRTVPSTMRYRKAGVTMCADSDVDEFSHYCVDGEVVEAMKSLLVMGSPLAKHT.

This sequence belongs to the CutC family.

The protein localises to the cytoplasm. The chain is PF03932 family protein CutC from Yersinia pseudotuberculosis serotype O:1b (strain IP 31758).